Consider the following 54-residue polypeptide: Ductus ejaculatorius peptide 99B (54 aa).

The signal sequence occupies residues 1–21 (MKTPLFLLLVVLASLLGLALS). Q22 is subject to Pyrrolidone carboxylic acid. Residue N25 is glycosylated (N-linked (GlcNAc...) asparagine). Cysteines 40 and 52 form a disulfide. Residues 53-54 (RK) constitute a propeptide that is removed on maturation.

The protein to paragonial peptide B. Ductus ejaculatorius.

It is found in the secreted. Its function is as follows. Induces post-mating responses; increased oviposition and reduced receptivity. The sequence is that of Ductus ejaculatorius peptide 99B (Dup99B) from Drosophila melanogaster (Fruit fly).